Consider the following 46-residue polypeptide: Iota-conotoxin-like R11.7 (46 aa).

Residues proline 2 and proline 11 each carry the 4-hydroxyproline modification. Disulfide bonds link cysteine 5/cysteine 19, cysteine 12/cysteine 22, cysteine 18/cysteine 27, and cysteine 21/cysteine 38. Proline 29 carries the 4-hydroxyproline modification. Phenylalanine 44 carries the post-translational modification D-phenylalanine.

Belongs to the conotoxin I1 superfamily. As to expression, expressed by the venom duct.

It is found in the secreted. Its function is as follows. Iota-conotoxins bind to voltage-gated sodium channels (Nav) and act as agonists by shifting the voltage-dependence of activation to more hyperpolarized levels. Produces general excitatory symptoms. This Conus radiatus (Rayed cone) protein is Iota-conotoxin-like R11.7.